The sequence spans 236 residues: Small ribosomal subunit protein uS3 (236 aa).

Residues 39–107 form the KH type-2 domain; it reads IREFLTEELK…DTSLNIVEVR (69 aa). The interval 214–236 is disordered; that stretch reads ASERRAVEGDNQGSSSNRRRENA.

This sequence belongs to the universal ribosomal protein uS3 family. Part of the 30S ribosomal subunit. Forms a tight complex with proteins S10 and S14.

In terms of biological role, binds the lower part of the 30S subunit head. Binds mRNA in the 70S ribosome, positioning it for translation. This is Small ribosomal subunit protein uS3 from Brucella abortus (strain S19).